The chain runs to 91 residues: Acyl-CoA-binding domain-containing protein 2 (91 aa).

The 86-residue stretch at L3–A88 folds into the ACB domain. An acyl-CoA-binding positions include K15, Y30–K34, K52, K56, and Y75.

Belongs to the ACBP family. Highly expressed in leaves. Expressed at low levels in roots and seeds.

It is found in the cytoplasm. Its subcellular location is the cytosol. In terms of biological role, binds medium- and long-chain acyl-CoA esters with high affinity. Can interact in vitro with linolenoyl-CoA. Binds palmitoyl-CoA and linoleoyl-CoA in vitro. Binds phosphatidic acid (PA) and phosphatidylcholine (PC) in vitro. May play a role in the biosynthesis of phospholipids. This Oryza sativa subsp. japonica (Rice) protein is Acyl-CoA-binding domain-containing protein 2.